The following is a 419-amino-acid chain: Transcription termination factor Rho (419 aa).

Positions 48–123 constitute a Rho RNA-BD domain; that stretch reads DIFGDGVLEI…LKVNEVNYDK (76 aa). 3 RNA-binding regions span residues 61–66, 78–80, and 108–110; these read GFGFLR, DIY, and ERY. ATP contacts are provided by residues 169–174, 181–186, and arginine 212; these read GRGQRG and KAGKTI. The interval 284 to 288 is RNA-binding 2; it reads VLTGG.

Belongs to the Rho family. In terms of assembly, homohexamer. The homohexamer assembles into an open ring structure.

Functionally, facilitates transcription termination by a mechanism that involves Rho binding to the nascent RNA, activation of Rho's RNA-dependent ATPase activity, and release of the mRNA from the DNA template. In Buchnera aphidicola subsp. Acyrthosiphon pisum (strain APS) (Acyrthosiphon pisum symbiotic bacterium), this protein is Transcription termination factor Rho.